Consider the following 35-residue polypeptide: Sperm protamine alpha isoform 2 (35 aa).

The segment at 1 to 35 (MPRRRRRASRPIRRRRRARRSTAVRRRRRVVRRRR) is disordered. Residues serine 9 and serine 21 each carry the phosphoserine modification.

Post-translationally, phosphorylated in immature sperm. Dephosphorylated in mature sperm allowing a stronger interaction with DNA. Gonads.

It is found in the nucleus. The protein localises to the chromosome. In terms of biological role, protamines substitute for histones in the chromatin of sperm during the haploid phase of spermatogenesis. They compact sperm DNA into a highly condensed, stable and inactive complex. In Scomber scombrus (Atlantic mackerel), this protein is Sperm protamine alpha isoform 2.